Reading from the N-terminus, the 474-residue chain is uncharacterized protein (474 aa).

Residues 1 to 11 are compositionally biased toward acidic residues; the sequence is MGGSDFEDDEL. Residues 1–163 form a disordered region; sequence MGGSDFEDDE…ETSPFNREDG (163 aa). Over residues 12-25 the composition is skewed to basic and acidic residues; it reads FKDLYGEENEKKVE. Residues 27-39 are compositionally biased toward polar residues; sequence ASGNQETSNVTPT. A compositionally biased stretch (basic and acidic residues) spans 40–76; the sequence is KENEGYEELEKSGEAGAERTKENPFREEPGADFDRSG. Residues 129–140 show a composition bias toward polar residues; the sequence is NDNYNENQSALT. RRM domains follow at residues 163–245 and 247–324; these read GKMF…EQEK and AKMF…RATP. The segment at 412–474 is disordered; that stretch reads DPSKMNQGTG…GGHSFHPYRR (63 aa). Residues 425–434 are compositionally biased toward low complexity; sequence PFSPSMPSGS. Residues 435 to 444 are compositionally biased toward gly residues; it reads SRGGYHGRNP.

Its subcellular location is the nucleus. This is an uncharacterized protein from Schizosaccharomyces pombe (strain 972 / ATCC 24843) (Fission yeast).